Reading from the N-terminus, the 55-residue chain is MARELWLTHPRNFGPGSRTCRKCGNHHGIIRKYDLNMCRRCFRTDAEAIGFNKYR.

Zn(2+)-binding residues include Cys-20, Cys-23, Cys-38, and Cys-41.

The protein belongs to the universal ribosomal protein uS14 family. It depends on Zn(2+) as a cofactor.

In Dictyostelium discoideum (Social amoeba), this protein is Small ribosomal subunit protein uS14 (rps29).